A 788-amino-acid polypeptide reads, in one-letter code: Ribonucleoside-diphosphate reductase subunit alpha (788 aa).

Positions 2-92 (ITVVKRNGRI…LYDLYHKVSG (91 aa)) constitute an ATP-cone domain. ATP-binding positions include Lys6, 12–18 (EPLDITK), and Thr52. A GDP-binding site is contributed by Thr200. Cys216 and Cys497 form a disulfide bridge. DTTP-binding positions include 223-225 (DNI) and Arg253. Asn424 serves as a coordination point for GDP. Asn424 (proton acceptor) is an active-site residue. Cys426 serves as the catalytic Cysteine radical intermediate. GDP-binding positions include Glu428 and 661-663 (SSI). Catalysis depends on Glu428, which acts as the Proton acceptor.

Belongs to the ribonucleoside diphosphate reductase large chain family. In terms of assembly, tetramer of two alpha and two beta subunits.

It catalyses the reaction a 2'-deoxyribonucleoside 5'-diphosphate + [thioredoxin]-disulfide + H2O = a ribonucleoside 5'-diphosphate + [thioredoxin]-dithiol. With respect to regulation, under complex allosteric control mediated by deoxynucleoside triphosphates and ATP binding to separate specificity and activation sites on the alpha subunit. The type of nucleotide bound at the specificity site determines substrate preference. It seems probable that ATP makes the enzyme reduce CDP and UDP, dGTP favors ADP reduction and dTTP favors GDP reduction. Stimulated by ATP and inhibited by dATP binding to the activity site. Its function is as follows. Provides the precursors necessary for DNA synthesis. Catalyzes the biosynthesis of deoxyribonucleotides from the corresponding ribonucleotides. The polypeptide is Ribonucleoside-diphosphate reductase subunit alpha (nrdA) (Helicobacter pylori (strain J99 / ATCC 700824) (Campylobacter pylori J99)).